A 597-amino-acid polypeptide reads, in one-letter code: Elongation factor 4 (597 aa).

Residues 2 to 184 (DHIRNFSIIA…ALIAKVPPPK (183 aa)) enclose the tr-type G domain. Residues 14–19 (DHGKST) and 131–134 (NKID) each bind GTP.

It belongs to the TRAFAC class translation factor GTPase superfamily. Classic translation factor GTPase family. LepA subfamily.

It localises to the cell inner membrane. The catalysed reaction is GTP + H2O = GDP + phosphate + H(+). In terms of biological role, required for accurate and efficient protein synthesis under certain stress conditions. May act as a fidelity factor of the translation reaction, by catalyzing a one-codon backward translocation of tRNAs on improperly translocated ribosomes. Back-translocation proceeds from a post-translocation (POST) complex to a pre-translocation (PRE) complex, thus giving elongation factor G a second chance to translocate the tRNAs correctly. Binds to ribosomes in a GTP-dependent manner. This is Elongation factor 4 from Paraburkholderia phymatum (strain DSM 17167 / CIP 108236 / LMG 21445 / STM815) (Burkholderia phymatum).